The chain runs to 60 residues: Mastoparan-D (60 aa).

The first 27 residues, 1–27 (MKNTILILFTAFIALLGFFGMSAEALA), serve as a signal peptide directing secretion. AXPX repeat units lie at residues 27–30 (ADPI), 31–34 (ADPV), 35–38 (AGPN), and 41–44 (ADPE). Residues 28–45 (DPIADPVAGPNPEADPEA) constitute a propeptide that is removed on maturation. Leu59 is subject to Leucine amide.

This sequence belongs to the MCD family. Mastoparan subfamily. Expressed by the venom gland.

The protein resides in the secreted. Its subcellular location is the target cell membrane. Its function is as follows. Antimicrobial and mast cell degranulating peptide. Has broad spectrum antibacterial activity against both Gram-positive and Gram-negative bacteria (S.aureus MIC=24-32 ug/ml, S.xylosus MIC=2 ug/ml, S.alactolyticus MIC=16 ug/ml, C.koseri MIC=4 ug/ml, E.coli MIC=8 ug/ml, K.pneumoniae MIC=32 ug/ml, P.aerugiosa MIC=128 ug/ml, S.choleraesuis MIC=16 ug/ml, S.typhimurium MIC=32 ug/ml, V.parahamelytics MIC=32 ug/ml). Affects membrane permeability of E.coli. Shows hemolytic activities on sheep, chicken and human erythrocytes. Its mast cell degranulation activity may be related to the activation of G-protein coupled receptors in mast cells as well as interaction with other proteins located in cell endosomal membranes in the mast cells. This chain is Mastoparan-D, found in Vespa ducalis (Black-tailed hornet).